A 208-amino-acid chain; its full sequence is Uracil phosphoribosyltransferase (208 aa).

5-phospho-alpha-D-ribose 1-diphosphate-binding positions include Arg77, Arg102, and Asp129–Ser137. Residues Ile193 and Gly198 to Ala200 each bind uracil. Asp199 is a 5-phospho-alpha-D-ribose 1-diphosphate binding site.

Belongs to the UPRTase family. Requires Mg(2+) as cofactor.

It catalyses the reaction UMP + diphosphate = 5-phospho-alpha-D-ribose 1-diphosphate + uracil. It functions in the pathway pyrimidine metabolism; UMP biosynthesis via salvage pathway; UMP from uracil: step 1/1. Allosterically activated by GTP. Functionally, catalyzes the conversion of uracil and 5-phospho-alpha-D-ribose 1-diphosphate (PRPP) to UMP and diphosphate. The protein is Uracil phosphoribosyltransferase of Mycoplasmopsis pulmonis (strain UAB CTIP) (Mycoplasma pulmonis).